The following is a 271-amino-acid chain: ELH (271 aa).

Positions 1–28 (MKRPNNRPTNTMSLILCLTLSSLCVSSQ) are cleaved as a signal peptide. 2 propeptides span residues 29–95 (SASV…NEKR) and 162–184 (AAGG…RRKR). The interval 162–190 (AAGGMEQSEGQNPETESHSRRKRSVLTPS) is disordered. Residue lysine 241 is modified to Lysine amide.

This sequence belongs to the molluscan ELH family. In terms of tissue distribution, bag cell neurons.

It localises to the secreted. In terms of biological role, ELH acts as a neurotransmitter locally, upon neurons of the abdominal ganglion and as a hormone by diffusing into the circulating hemolymph and modulating the activity of other organs. It specifically causes contraction of smooth muscle in the ovotestis and expulsion of the egg string. Functionally, alpha-BCP decreases the activity of a cluster of neurons in the left upper quadrant of the abdominal ganglion. Its function is as follows. Beta-BCP specifically excites 2 neurons, L1 and R1, in the abdominal ganglion. This chain is ELH, found in Aplysia californica (California sea hare).